The following is a 102-amino-acid chain: Complement inhibitor RaCI6 (102 aa).

Positions 1-24 are cleaved as a signal peptide; the sequence is MAALNGLVLLLLTISAMFISECYS. Cystine bridges form between Cys-37–Cys-61 and Cys-42–Cys-63.

The protein belongs to the RaCI family. In terms of tissue distribution, expressed in salivary glands.

The protein localises to the secreted. Functionally, complement inhibitor. Prevents complement-mediated C5 activation by binding to C5. Binds C5 at a different binding site than the other tick complement inhibitors OmCI and CirpT1, and the drug eculizumab. The sequence is that of Complement inhibitor RaCI6 from Dermacentor andersoni (Rocky mountain wood tick).